The following is a 581-amino-acid chain: A-type ATP synthase subunit A (581 aa).

234-241 provides a ligand contact to ATP; sequence GPFGSGKT.

It belongs to the ATPase alpha/beta chains family. As to quaternary structure, has multiple subunits with at least A(3), B(3), C, D, E, F, H, I and proteolipid K(x).

It is found in the cell membrane. The catalysed reaction is ATP + H2O + 4 H(+)(in) = ADP + phosphate + 5 H(+)(out). In terms of biological role, component of the A-type ATP synthase that produces ATP from ADP in the presence of a proton gradient across the membrane. The A chain is the catalytic subunit. The sequence is that of A-type ATP synthase subunit A from Archaeoglobus fulgidus (strain ATCC 49558 / DSM 4304 / JCM 9628 / NBRC 100126 / VC-16).